A 115-amino-acid chain; its full sequence is UPF0738 protein SAB0871 (115 aa).

It belongs to the UPF0738 family.

This chain is UPF0738 protein SAB0871, found in Staphylococcus aureus (strain bovine RF122 / ET3-1).